The primary structure comprises 95 residues: Putative membrane protein insertion efficiency factor (95 aa).

Belongs to the UPF0161 family.

It is found in the cell membrane. In terms of biological role, could be involved in insertion of integral membrane proteins into the membrane. The protein is Putative membrane protein insertion efficiency factor of Lactobacillus delbrueckii subsp. bulgaricus (strain ATCC 11842 / DSM 20081 / BCRC 10696 / JCM 1002 / NBRC 13953 / NCIMB 11778 / NCTC 12712 / WDCM 00102 / Lb 14).